Consider the following 186-residue polypeptide: Small ribosomal subunit protein uS7 (186 aa).

Belongs to the universal ribosomal protein uS7 family. As to quaternary structure, part of the 30S ribosomal subunit.

In terms of biological role, one of the primary rRNA binding proteins, it binds directly to 16S rRNA where it nucleates assembly of the head domain of the 30S subunit. Is located at the subunit interface close to the decoding center. In Methanothermobacter thermautotrophicus (strain ATCC 29096 / DSM 1053 / JCM 10044 / NBRC 100330 / Delta H) (Methanobacterium thermoautotrophicum), this protein is Small ribosomal subunit protein uS7.